A 122-amino-acid polypeptide reads, in one-letter code: Large ribosomal subunit protein uL14 (122 aa).

The protein belongs to the universal ribosomal protein uL14 family. Part of the 50S ribosomal subunit. Forms a cluster with proteins L3 and L19. In the 70S ribosome, L14 and L19 interact and together make contacts with the 16S rRNA in bridges B5 and B8.

Its function is as follows. Binds to 23S rRNA. Forms part of two intersubunit bridges in the 70S ribosome. The polypeptide is Large ribosomal subunit protein uL14 (Vesicomyosocius okutanii subsp. Calyptogena okutanii (strain HA)).